A 230-amino-acid polypeptide reads, in one-letter code: Acyl-protein thioesterase 1 (230 aa).

Residues Ser-119, Asp-174, and His-208 each act as charge relay system in the active site. The residue at position 224 (Lys-224) is an N6-acetyllysine.

Belongs to the AB hydrolase superfamily. AB hydrolase 2 family. As to quaternary structure, homodimer. In terms of tissue distribution, ubiquitous. Detected at low levels in all tissues tested.

The protein resides in the cytoplasm. It is found in the cell membrane. Its subcellular location is the nucleus membrane. The protein localises to the endoplasmic reticulum. It carries out the reaction S-hexadecanoyl-L-cysteinyl-[protein] + H2O = L-cysteinyl-[protein] + hexadecanoate + H(+). It catalyses the reaction 1-hexadecanoyl-sn-glycero-3-phosphocholine + H2O = sn-glycerol 3-phosphocholine + hexadecanoate + H(+). The catalysed reaction is a 1-(9Z-octadecenoyl)-2-acyl-sn-glycero-3-phosphocholine + H2O = a 2-acyl-sn-glycero-3-phosphocholine + (9Z)-octadecenoate + H(+). In terms of biological role, acts as an acyl-protein thioesterase. Hydrolyzes fatty acids from S-acylated cysteine residues in proteins such as trimeric G alpha proteins or HRAS. Acts as a palmitoyl thioesterase that catalyzes depalmitoylation of proteins, such as ADRB2, KCNMA1 and SQSTM1. Acts as a negative regulator of autophagy by mediating palmitoylation of SQSTM1, decreasing affinity between SQSTM1 and ATG8 proteins and recruitment of ubiquitinated cargo proteins to autophagosomes. Acts as a lysophospholipase and hydrolyzes lysophosphatidylcholine (lyso-PC). Also hydrolyzes lysophosphatidylethanolamine (lyso-PE), lysophosphatidylinositol (lyso-PI) and lysophosphatidylserine (lyso-PS). Has much higher thioesterase activity than lysophospholipase activity. Contributes to the production of lysophosphatidic acid (LPA) during blood coagulation by recognizing and cleaving plasma phospholipids to generate lysophospholipids which in turn act as substrates for ENPP2 to produce LPA. The polypeptide is Acyl-protein thioesterase 1 (Lypla1) (Rattus norvegicus (Rat)).